A 202-amino-acid chain; its full sequence is Superoxide dismutase [Fe] (202 aa).

4 residues coordinate Fe cation: H27, H82, D164, and H168.

It belongs to the iron/manganese superoxide dismutase family. As to quaternary structure, homodimer. Requires Fe cation as cofactor.

The enzyme catalyses 2 superoxide + 2 H(+) = H2O2 + O2. Destroys superoxide anion radicals which are normally produced within the cells and which are toxic to biological systems. The sequence is that of Superoxide dismutase [Fe] (sodA) from Enterococcus faecalis (strain ATCC 700802 / V583).